A 331-amino-acid polypeptide reads, in one-letter code: Proline-rich protein 33 (331 aa).

3 disordered regions span residues 1–112 (MGPQ…SVPR), 128–185 (SLES…PKVA), and 204–247 (APEP…APAS). Residues 94–105 (PEEPPVPRPPPG) show a composition bias toward pro residues. Positions 149–169 (PPMAGPAAEAERVSSPAWASS) are enriched in low complexity. Residues 170-185 (PTPPSGPHPCPVPKVA) are compositionally biased toward pro residues. A compositionally biased stretch (low complexity) spans 217 to 238 (EPEVPTPTEQEVPAPTEQEVPA).

The chain is Proline-rich protein 33 (PRR33) from Homo sapiens (Human).